A 479-amino-acid polypeptide reads, in one-letter code: PTS system MurNAc-GlcNAc-specific EIIBC component (479 aa).

Residues Q5–E87 enclose the PTS EIIB type-1 domain. The Phosphocysteine intermediate; for EIIB activity role is filled by C27. Residues K125–D479 form the PTS EIIC type-1 domain. The next 10 membrane-spanning stretches (helical) occupy residues I130–V150, V169–I189, F195–T215, L229–I249, I269–V289, I303–G323, L344–V364, A379–L399, F403–I423, and L445–F465.

The protein localises to the cell membrane. It catalyses the reaction N-acetyl-beta-D-muramate-(1-&gt;4)-N-acetyl-D-glucosamine(out) + N(pros)-phospho-L-histidyl-[protein] = 6-phospho-N-acetyl-beta-D-muramate-(1-&gt;4)-N-acetyl-D-glucosamine(in) + L-histidyl-[protein]. Its pathway is cell wall biogenesis; peptidoglycan recycling. Its function is as follows. The phosphoenolpyruvate-dependent sugar phosphotransferase system (sugar PTS), a major carbohydrate active transport system, catalyzes the phosphorylation of incoming sugar substrates concomitantly with their translocation across the cell membrane. This system is involved in the uptake and phosphorylation of MurNAc-GlcNAc, the principle peptidoglycan turnover product of S.aureus, yielding cytoplasmic MurNAc 6P-GlcNAc. In Staphylococcus saprophyticus subsp. saprophyticus (strain ATCC 15305 / DSM 20229 / NCIMB 8711 / NCTC 7292 / S-41), this protein is PTS system MurNAc-GlcNAc-specific EIIBC component.